A 307-amino-acid polypeptide reads, in one-letter code: S-methyl-5'-thioadenosine phosphorylase (307 aa).

Phosphate is bound by residues S16, 59–60, and 92–93; these read RH and SA. M198 contacts substrate. S199 contributes to the phosphate binding site. Residue 222-224 participates in substrate binding; the sequence is DYD.

It belongs to the PNP/MTAP phosphorylase family. MTAP subfamily. In terms of assembly, homotrimer.

The protein localises to the cytoplasm. It localises to the nucleus. It catalyses the reaction S-methyl-5'-thioadenosine + phosphate = 5-(methylsulfanyl)-alpha-D-ribose 1-phosphate + adenine. It participates in amino-acid biosynthesis; L-methionine biosynthesis via salvage pathway; S-methyl-5-thio-alpha-D-ribose 1-phosphate from S-methyl-5'-thioadenosine (phosphorylase route): step 1/1. Catalyzes the reversible phosphorylation of S-methyl-5'-thioadenosine (MTA) to adenine and 5-methylthioribose-1-phosphate. Involved in the breakdown of MTA, a major by-product of polyamine biosynthesis. Responsible for the first step in the methionine salvage pathway after MTA has been generated from S-adenosylmethionine. Has broad substrate specificity with 6-aminopurine nucleosides as preferred substrates. The protein is S-methyl-5'-thioadenosine phosphorylase of Schizosaccharomyces pombe (strain 972 / ATCC 24843) (Fission yeast).